The sequence spans 861 residues: MNPIDTDDLEKHTPMMRQYLTMKAEHHDMLLFYRMGDFYELFYDDAKRASELLGISLTARGKSGGDPIPMAGIPYHAVEGYLAKLVQIGQSVAICEQIGDPATSKGPVERKVVRIVTPGTLTDEALLQERQDNLLAAVYQGKVGFGYATLDVSSGRFVIAELETKESLEAELQRTNPVEILYSEDFGAMELLHHFKGKRRRPEWEFDYDTSIKLLLAQFGTKDLHGFGITDARLSLQAAGCLMQYVKDTQRTALPHINAITRFNQTDTIVLDAATRRNLELTQNLSGGRDNTLAAVLDNTATAMGSRMLQRWIHQPLRDHAQIFARQTAVNELLETTAHESLHEQLKALGDIERIMARLALRTARPRDFARLRQALNLLPKLQQSLAQLSAPHTVKLGQLLGEFPEEQQLLERAIVDNPPMLIRDGGVIREGYNAELDEWRGLSEGATDYLVQLEAREKERTGIATLKVGYNRVHGYYIEVSRLQSQQVPLNYQRRQTLKNMERYITPELKEYEEKVLSSQGKALALEKQLWDELFDLILPKLHELQAFARAAAELDVLSNFAERAETLGYTCPELSSEIGVKIEAGRHPVVERVSQTPFIANPVTLYNQRRMLIVTGPNMGGKSTYMRQVALITLMAHIGCFVPADRAIIGPIDRIFTRIGASDDLASGRSTFMVEMTETANILHNATAQSLVLMDEIGRGTSTYDGLSLAWSAAEYLAQQVGAMTLFATHYFELTQLPELMAGVYNVHLDAIEHEDTIAFMHAVQEGAASKSYGLQVAALAGVPARVIKAAKHKLHQLESRDHQVEGVNVNGTRAPIQTLLALPEPVENPAVSKLKAINPDNLTPKQALDLLYELKRLS.

618–625 lines the ATP pocket; the sequence is GPNMGGKS.

The protein belongs to the DNA mismatch repair MutS family.

This protein is involved in the repair of mismatches in DNA. It is possible that it carries out the mismatch recognition step. This protein has a weak ATPase activity. The polypeptide is DNA mismatch repair protein MutS (Shewanella sp. (strain MR-4)).